Consider the following 167-residue polypeptide: MKPQLLLLEDVDGLGRSGDLVVAKPGYVRNYLLPKGKAVVASAGTLRLQAKLQEQRLLQAAADKEESLRLAETLRSLVLDFQVRVDSENNMYGSVTVNDIISVADQKGVVLTRKNFPRAHSGVKTLGKHVIGLKLKEGVTADLHLEVRADHEIAEQKELQSMEEQED.

The protein belongs to the bacterial ribosomal protein bL9 family.

Its function is as follows. Binds to the 23S rRNA. The chain is Large ribosomal subunit protein bL9 from Chlamydia muridarum (strain MoPn / Nigg).